A 556-amino-acid polypeptide reads, in one-letter code: Oxygen-dependent choline dehydrogenase (556 aa).

An FAD-binding site is contributed by 4–33 (DYIIIGAGSAGNVLATRLTEDPNTTVLLLE). Residue His-473 is the Proton acceptor of the active site.

Belongs to the GMC oxidoreductase family. FAD is required as a cofactor.

It carries out the reaction choline + A = betaine aldehyde + AH2. It catalyses the reaction betaine aldehyde + NAD(+) + H2O = glycine betaine + NADH + 2 H(+). Its pathway is amine and polyamine biosynthesis; betaine biosynthesis via choline pathway; betaine aldehyde from choline (cytochrome c reductase route): step 1/1. Functionally, involved in the biosynthesis of the osmoprotectant glycine betaine. Catalyzes the oxidation of choline to betaine aldehyde and betaine aldehyde to glycine betaine at the same rate. In Escherichia coli O127:H6 (strain E2348/69 / EPEC), this protein is Oxygen-dependent choline dehydrogenase.